The chain runs to 251 residues: 3-deoxy-manno-octulosonate cytidylyltransferase (251 aa).

The protein belongs to the KdsB family.

The protein resides in the cytoplasm. The enzyme catalyses 3-deoxy-alpha-D-manno-oct-2-ulosonate + CTP = CMP-3-deoxy-beta-D-manno-octulosonate + diphosphate. It functions in the pathway nucleotide-sugar biosynthesis; CMP-3-deoxy-D-manno-octulosonate biosynthesis; CMP-3-deoxy-D-manno-octulosonate from 3-deoxy-D-manno-octulosonate and CTP: step 1/1. It participates in bacterial outer membrane biogenesis; lipopolysaccharide biosynthesis. Activates KDO (a required 8-carbon sugar) for incorporation into bacterial lipopolysaccharide in Gram-negative bacteria. In Vibrio vulnificus (strain YJ016), this protein is 3-deoxy-manno-octulosonate cytidylyltransferase.